We begin with the raw amino-acid sequence, 273 residues long: NAD(P)H-hydrate epimerase (273 aa).

The 240-residue stretch at 18 to 257 folds into the YjeF N-terminal domain; the sequence is ALKLDEDLIN…LLAMEYDVQE (240 aa). 71-75 provides a ligand contact to (6S)-NADPHX; it reads NNGGD. Residues N72 and D146 each coordinate K(+). Residues 150–157, Y162, and D188 contribute to the (6S)-NADPHX site; that span reads GFSFHGGP. A K(+)-binding site is contributed by S191.

Belongs to the NnrE/AIBP family. It depends on K(+) as a cofactor.

It catalyses the reaction (6R)-NADHX = (6S)-NADHX. The catalysed reaction is (6R)-NADPHX = (6S)-NADPHX. Catalyzes the epimerization of the S- and R-forms of NAD(P)HX, a damaged form of NAD(P)H that is a result of enzymatic or heat-dependent hydration. This is a prerequisite for the S-specific NAD(P)H-hydrate dehydratase to allow the repair of both epimers of NAD(P)HX. This Giardia intestinalis (strain ATCC 50803 / WB clone C6) (Giardia lamblia) protein is NAD(P)H-hydrate epimerase.